Reading from the N-terminus, the 269-residue chain is Protein MGF 110-1L (269 aa).

A topological domain (cytoplasmic) is located at residue methionine 1. The A repeat unit spans residues 1-145 (MLGLQIFTLL…YVRKRSLQTV (145 aa)). A helical transmembrane segment spans residues 2 to 18 (LGLQIFTLLSIPTLLYT). The Extracellular portion of the chain corresponds to 19 to 116 (YELELLDLTR…HEWHEAVIRK (98 aa)). The N-linked (GlcNAc...) asparagine; by host glycan is linked to asparagine 75. A helical membrane pass occupies residues 117 to 137 (WQKLLTYGFYLVGCVLVANYV). The Cytoplasmic portion of the chain corresponds to 138-144 (RKRSLQT). Residues 145–165 (VMYLLVLLVIFFLLSQLMLYR) form a helical membrane-spanning segment. The B repeat unit spans residues 147-269 (YLLVLLVIFF…DNLMKKQDMM (123 aa)). The Extracellular portion of the chain corresponds to 166–269 (ELEDKKHKIG…DNLMKKQDMM (104 aa)).

This sequence belongs to the asfivirus MGF 110 family.

The protein resides in the host membrane. Plays a role in virus cell tropism, and may be required for efficient virus replication in macrophages. The sequence is that of Protein MGF 110-1L from African swine fever virus (isolate Tick/South Africa/Pretoriuskop Pr4/1996) (ASFV).